We begin with the raw amino-acid sequence, 173 residues long: MSKEKEVLLNDEIQADEIRCIGDDGKVYGIISSDEALDIANRLGLDLVMIAPEAKPPVCKIMDYGKFRYQQEKKQKEAKKKQKVIDIKEIKLSVKIAQNDINYKVKHASEFLEQGKHVKFRVFLKGREMGSPEAGVALLEKIWQMVEDIADRDKEPLLEGRYVNMLVTPKKKK.

It belongs to the IF-3 family. In terms of assembly, monomer.

It is found in the cytoplasm. Functionally, IF-3 binds to the 30S ribosomal subunit and shifts the equilibrium between 70S ribosomes and their 50S and 30S subunits in favor of the free subunits, thus enhancing the availability of 30S subunits on which protein synthesis initiation begins. The sequence is that of Translation initiation factor IF-3 from Campylobacter lari (strain RM2100 / D67 / ATCC BAA-1060).